Reading from the N-terminus, the 328-residue chain is Phosphate acyltransferase (328 aa).

The protein belongs to the PlsX family. Homodimer. Probably interacts with PlsY.

It localises to the cytoplasm. It catalyses the reaction a fatty acyl-[ACP] + phosphate = an acyl phosphate + holo-[ACP]. The protein operates within lipid metabolism; phospholipid metabolism. Functionally, catalyzes the reversible formation of acyl-phosphate (acyl-PO(4)) from acyl-[acyl-carrier-protein] (acyl-ACP). This enzyme utilizes acyl-ACP as fatty acyl donor, but not acyl-CoA. The chain is Phosphate acyltransferase from Campylobacter jejuni (strain RM1221).